The following is a 159-amino-acid chain: Protein Smg homolog (159 aa).

Belongs to the Smg family.

This chain is Protein Smg homolog, found in Vibrio vulnificus (strain CMCP6).